The sequence spans 357 residues: UDP-N-acetylglucosamine--N-acetylmuramyl-(pentapeptide) pyrophosphoryl-undecaprenol N-acetylglucosamine transferase (357 aa).

UDP-N-acetyl-alpha-D-glucosamine contacts are provided by residues 15 to 17 (TGG), asparagine 124, arginine 165, serine 194, and glutamine 288.

Belongs to the glycosyltransferase 28 family. MurG subfamily.

The protein resides in the cell inner membrane. It catalyses the reaction di-trans,octa-cis-undecaprenyl diphospho-N-acetyl-alpha-D-muramoyl-L-alanyl-D-glutamyl-meso-2,6-diaminopimeloyl-D-alanyl-D-alanine + UDP-N-acetyl-alpha-D-glucosamine = di-trans,octa-cis-undecaprenyl diphospho-[N-acetyl-alpha-D-glucosaminyl-(1-&gt;4)]-N-acetyl-alpha-D-muramoyl-L-alanyl-D-glutamyl-meso-2,6-diaminopimeloyl-D-alanyl-D-alanine + UDP + H(+). Its pathway is cell wall biogenesis; peptidoglycan biosynthesis. Cell wall formation. Catalyzes the transfer of a GlcNAc subunit on undecaprenyl-pyrophosphoryl-MurNAc-pentapeptide (lipid intermediate I) to form undecaprenyl-pyrophosphoryl-MurNAc-(pentapeptide)GlcNAc (lipid intermediate II). The polypeptide is UDP-N-acetylglucosamine--N-acetylmuramyl-(pentapeptide) pyrophosphoryl-undecaprenol N-acetylglucosamine transferase (Trichormus variabilis (strain ATCC 29413 / PCC 7937) (Anabaena variabilis)).